We begin with the raw amino-acid sequence, 687 residues long: Putative secreted metallopeptidase (687 aa).

An N-terminal signal peptide occupies residues 1-22 (MLFTSTAVAALSGALLIQPALA). N54, N114, N252, N256, and N379 each carry an N-linked (GlcNAc...) asparagine glycan.

This sequence belongs to the peptidase M10B family.

Its subcellular location is the secreted. This chain is Putative secreted metallopeptidase, found in Arthroderma benhamiae (strain ATCC MYA-4681 / CBS 112371) (Trichophyton mentagrophytes).